Here is a 660-residue protein sequence, read N- to C-terminus: Polyadenylation factor subunit 2 (660 aa).

Basic and acidic residues predominate over residues 1–12; it reads MSYEPRGDHDKG. Residues 1–32 are disordered; sequence MSYEPRGDHDKGYGGGGGHDGLPPRNRGRRPV. 7 WD repeats span residues 94-133, 136-176, 177-216, 219-258, 261-301, 304-344, and 376-415; these read KIKHPINVVRWTPEGRRLLTASSSGEFTLWNGTGFNFETI, AHDS…ESIR, GHTDPIRDLAFSPNDTKFVTASDDQTLKVFDFAGGSTDMT, GHGWDAKSCDWHPSRGLIVSGSKDHLVKLWDPRTGRCLTT, GHKN…DIAL, GHEK…TAPD, and AHDFAIWSLDWHPLGHILASGSNDRITRFWSRARPGEAPE. The segment at 562-660 is disordered; it reads KAGYQPPPPP…QSKGNYTRVR (99 aa). Residues 566 to 610 show a composition bias toward pro residues; sequence QPPPPPGSAGAPMPPPGILPPGLIPPPGAAGFPMPPPGFAPPPLI.

Its subcellular location is the nucleus. In terms of biological role, required for 3'-end cleavage and polyadenylation of pre-mRNAs. Also involved in chromosome segregation where it has a role in chromosome attachment to the mitotic spindle. In Neurospora crassa (strain ATCC 24698 / 74-OR23-1A / CBS 708.71 / DSM 1257 / FGSC 987), this protein is Polyadenylation factor subunit 2 (paa-1).